The chain runs to 183 residues: Endoribonuclease AbiQ (183 aa).

The protein belongs to the ToxN/AbiQ toxin family. In terms of assembly, forms a triangular heterohexamer with a single 35-nt-long repeat of RNA antitoxin AntiQ.

The protein localises to the cytoplasm. Functionally, toxic component of a type III toxin-antitoxin (TA) system. An endoribonuclease that is probably sequence-specific. It is neutralized by its cognate antitoxin RNA AntiQ, which has 2.8 35 nucleotide-long repeats. Cannot be cloned in L.lactis subsp. cremoris strain NZ9000 in the absence of the antitoxin gene; expression in strain NZ9000 even in the presence of antiQ inhibits growth in a bacteriostatic fashion. Confers resistance to 936 and c2 phages but not P335 phages in L.lactis, causes an abortive infection (Abi phenotype). Viral DNA is replicated but not cleaved from its concatemeric form, while the viral major structural protein is produced normally in the presence of this protein. Operon expression in E.coli confers resistance to 3 phages of the Myoviridae family (T4, RB69 and phage 2) and 1 of the Siphoviridae family (T5), but not other tested phages (T1, T3, lambda vir, HK97, Mu and pilH alpha). The presence of this operon in L.lactis subsp. lactis strain IL1403 during phage P008 infection alters the viral transcription profiles. The protein is Endoribonuclease AbiQ of Lactococcus lactis subsp. lactis (Streptococcus lactis).